The primary structure comprises 218 residues: tRNA (guanosine(18)-2'-O)-methyltransferase (218 aa).

Positions 111 and 154 each coordinate S-adenosyl-L-methionine.

This sequence belongs to the class IV-like SAM-binding methyltransferase superfamily. RNA methyltransferase TrmH family.

The catalysed reaction is guanosine(18) in tRNA + S-adenosyl-L-methionine = 2'-O-methylguanosine(18) in tRNA + S-adenosyl-L-homocysteine + H(+). Catalyzes the 2'-O methylation of guanosine at position 18 in tRNA. The chain is tRNA (guanosine(18)-2'-O)-methyltransferase from Borreliella burgdorferi (strain ATCC 35210 / DSM 4680 / CIP 102532 / B31) (Borrelia burgdorferi).